An 84-amino-acid chain; its full sequence is Small ribosomal subunit protein bS18 (84 aa).

The protein belongs to the bacterial ribosomal protein bS18 family. In terms of assembly, part of the 30S ribosomal subunit. Forms a tight heterodimer with protein bS6.

Binds as a heterodimer with protein bS6 to the central domain of the 16S rRNA, where it helps stabilize the platform of the 30S subunit. In Clostridium kluyveri (strain NBRC 12016), this protein is Small ribosomal subunit protein bS18.